The chain runs to 293 residues: Bifunctional protein FolD (293 aa).

NADP(+)-binding positions include G162–S164 and I227.

The protein belongs to the tetrahydrofolate dehydrogenase/cyclohydrolase family. In terms of assembly, homodimer.

The enzyme catalyses (6R)-5,10-methylene-5,6,7,8-tetrahydrofolate + NADP(+) = (6R)-5,10-methenyltetrahydrofolate + NADPH. It catalyses the reaction (6R)-5,10-methenyltetrahydrofolate + H2O = (6R)-10-formyltetrahydrofolate + H(+). It functions in the pathway one-carbon metabolism; tetrahydrofolate interconversion. Functionally, catalyzes the oxidation of 5,10-methylenetetrahydrofolate to 5,10-methenyltetrahydrofolate and then the hydrolysis of 5,10-methenyltetrahydrofolate to 10-formyltetrahydrofolate. This is Bifunctional protein FolD from Metamycoplasma arthritidis (strain 158L3-1) (Mycoplasma arthritidis).